A 181-amino-acid chain; its full sequence is Regulator of G-protein signaling 5 (181 aa).

In terms of domain architecture, RGS spans 64-180 (SLDKLLQSNY…VRSEFYKELI (117 aa)).

It localises to the cytoplasm. It is found in the membrane. In terms of biological role, inhibits signal transduction by increasing the GTPase activity of G protein alpha subunits thereby driving them into their inactive GDP-bound form. Binds to G(i)-alpha and G(o)-alpha, but not to G(s)-alpha. The protein is Regulator of G-protein signaling 5 (Rgs5) of Rattus norvegicus (Rat).